The chain runs to 175 residues: Large ribosomal subunit protein uL22 (175 aa).

A disordered region spans residues 113-175 (VESRPVKDQR…EASETKGGSD (63 aa)). Positions 136–154 (KTAGRAPAKKAGASSGATK) are enriched in low complexity. Residues 166–175 (EASETKGGSD) are compositionally biased toward basic and acidic residues.

It belongs to the universal ribosomal protein uL22 family. As to quaternary structure, part of the 50S ribosomal subunit.

Its function is as follows. This protein binds specifically to 23S rRNA; its binding is stimulated by other ribosomal proteins, e.g. L4, L17, and L20. It is important during the early stages of 50S assembly. It makes multiple contacts with different domains of the 23S rRNA in the assembled 50S subunit and ribosome. Functionally, the globular domain of the protein is located near the polypeptide exit tunnel on the outside of the subunit, while an extended beta-hairpin is found that lines the wall of the exit tunnel in the center of the 70S ribosome. This chain is Large ribosomal subunit protein uL22, found in Mycobacterium leprae (strain TN).